The chain runs to 266 residues: DNA primase (266 aa).

The segment at 244 to 266 (VTTTTTPSPPKIGSMQTTTKSTT) is disordered. The segment covering 257 to 266 (SMQTTTKSTT) has biased composition (polar residues).

Belongs to the baculoviridae LEF-1 family. As to quaternary structure, interacts with LEF-2.

Plays an essential role in viral DNA replication. May generates single-stranded DNA for both leading and lagging strand synthesis. The primase initiates primer synthesis and thereby produces large amount of short RNA primers on the lagging strand that the polymerase elongates using dNTPs. This is DNA primase (LEF-1) from Autographa californica nuclear polyhedrosis virus (AcMNPV).